Consider the following 335-residue polypeptide: Rho guanine nucleotide exchange factor 39 (335 aa).

The region spanning 22–197 (KRACTARELL…SETAQRVHTI (176 aa)) is the DH domain. One can recognise a PH domain in the interval 227–331 (WFLRQGWLLV…WYHSLTLAIS (105 aa)).

The protein localises to the cell membrane. Promotes cell proliferation. This chain is Rho guanine nucleotide exchange factor 39 (ARHGEF39), found in Bos taurus (Bovine).